A 491-amino-acid polypeptide reads, in one-letter code: MATQWEVVIGLETHAQLSTVSKIFSGASTQFGAEPNTQACPVDLALPGVLPVLNRGAVERAIRFGLAIGSTIAPRSIFARKNYFYPDLPKGYQISQYEIPVVQGGQITIQVPANEKAGKPAYEKTVNLTRAHLEEDAGKSLHEDFAGMTGIDLNRAGTPLLEIVTEPEMRSAAEAVAYAKALHALVVWLGICDGNMQEGSFRCDANVSVRPVGQEKFGTRAEIKNLNSFRFLEEAINYEVRRQIELIEDGGEVVQETRLYDPDKRETRSMRSKEDAHDYRYFPDPDLMPLVIGRDWVERVQSGMPELPAAMQQRFVDEYGVSAYDAGVLTSSKAMAAYFESVVAKAGAANAKIVANWLMGDVSSQLNRDGIEIDAIPVSAAQLALLLQRIADGTISNKIAKEIFATIWDEKATDEGAADRIIDAKGLKQISDTGALEAIIDEVLAANAKSVEEFRAGKEKAFNALIGQAMKATKGKANPQQVNELLKKKLG.

Belongs to the GatB/GatE family. GatB subfamily. In terms of assembly, heterotrimer of A, B and C subunits.

The enzyme catalyses L-glutamyl-tRNA(Gln) + L-glutamine + ATP + H2O = L-glutaminyl-tRNA(Gln) + L-glutamate + ADP + phosphate + H(+). The catalysed reaction is L-aspartyl-tRNA(Asn) + L-glutamine + ATP + H2O = L-asparaginyl-tRNA(Asn) + L-glutamate + ADP + phosphate + 2 H(+). In terms of biological role, allows the formation of correctly charged Asn-tRNA(Asn) or Gln-tRNA(Gln) through the transamidation of misacylated Asp-tRNA(Asn) or Glu-tRNA(Gln) in organisms which lack either or both of asparaginyl-tRNA or glutaminyl-tRNA synthetases. The reaction takes place in the presence of glutamine and ATP through an activated phospho-Asp-tRNA(Asn) or phospho-Glu-tRNA(Gln). The protein is Aspartyl/glutamyl-tRNA(Asn/Gln) amidotransferase subunit B of Burkholderia cenocepacia (strain HI2424).